A 152-amino-acid polypeptide reads, in one-letter code: UPF0266 membrane protein YobD (152 aa).

A run of 3 helical transmembrane segments spans residues 6 to 26 (LVLI…QFIM), 45 to 65 (VDSV…VTSH), and 67 to 87 (AQMT…IFWI).

This sequence belongs to the UPF0266 family.

The protein localises to the cell inner membrane. This is UPF0266 membrane protein YobD from Salmonella enteritidis PT4 (strain P125109).